The primary structure comprises 666 residues: Protein SLY1 (666 aa).

Tandem repeats lie at residues 106–142 (KENIDIIVNDLKSDKYSEFYINFTSSLPRNLLEDLAQ), 220–257 (KGGPAEIIAEKLGTKLRDFVINTNSSSTSTLQGNDSLE), 436–474 (LDILKDGKTNNLEDKLRSFIVLYLTSTTGLPKDFVQNVE), and 478–514 (KENDYDINALKYVYKLREFMQLSNMSLQNKSLEDGSD). Residues 106–514 (KENIDIIVND…QNKSLEDGSD (409 aa)) form a 4 X approximate repeats region.

The protein belongs to the STXBP/unc-18/SEC1 family. As to quaternary structure, interacts with SED5.

The protein localises to the cytoplasm. It localises to the membrane. Its function is as follows. Able to suppress the functional loss of YPT1. SLY1 is essential for cell viability. May interact indirectly, or directly with YPT1. This is Protein SLY1 (SLY1) from Saccharomyces cerevisiae (strain ATCC 204508 / S288c) (Baker's yeast).